Here is a 447-residue protein sequence, read N- to C-terminus: GTPase Der (447 aa).

EngA-type G domains lie at 3–167 (PVIA…HLAD) and 180–353 (IRLA…ASAN). GTP contacts are provided by residues 9–16 (GRPNVGKS), 56–60 (DTGGF), 119–122 (NKAE), 186–193 (GRPNVGKS), 233–237 (DTAGL), and 298–301 (NKWD). A KH-like domain is found at 354 to 438 (RKMSTPVLTR…PMRIQMKSSH (85 aa)).

The protein belongs to the TRAFAC class TrmE-Era-EngA-EngB-Septin-like GTPase superfamily. EngA (Der) GTPase family. As to quaternary structure, associates with the 50S ribosomal subunit.

In terms of biological role, GTPase that plays an essential role in the late steps of ribosome biogenesis. In Polaromonas sp. (strain JS666 / ATCC BAA-500), this protein is GTPase Der.